The following is a 250-amino-acid chain: 3-deoxy-manno-octulosonate cytidylyltransferase (250 aa).

The protein belongs to the KdsB family.

Its subcellular location is the cytoplasm. The enzyme catalyses 3-deoxy-alpha-D-manno-oct-2-ulosonate + CTP = CMP-3-deoxy-beta-D-manno-octulosonate + diphosphate. It participates in nucleotide-sugar biosynthesis; CMP-3-deoxy-D-manno-octulosonate biosynthesis; CMP-3-deoxy-D-manno-octulosonate from 3-deoxy-D-manno-octulosonate and CTP: step 1/1. Its pathway is bacterial outer membrane biogenesis; lipopolysaccharide biosynthesis. Functionally, activates KDO (a required 8-carbon sugar) for incorporation into bacterial lipopolysaccharide in Gram-negative bacteria. In Francisella tularensis subsp. holarctica (strain LVS), this protein is 3-deoxy-manno-octulosonate cytidylyltransferase.